The primary structure comprises 215 residues: LexA repressor (215 aa).

Residues 28–48 (RAEIAAELGFSSPNAAEEHLR) constitute a DNA-binding region (H-T-H motif). Residues serine 133 and lysine 170 each act as for autocatalytic cleavage activity in the active site.

Belongs to the peptidase S24 family. Homodimer.

The enzyme catalyses Hydrolysis of Ala-|-Gly bond in repressor LexA.. Its function is as follows. Represses a number of genes involved in the response to DNA damage (SOS response), including recA and lexA. In the presence of single-stranded DNA, RecA interacts with LexA causing an autocatalytic cleavage which disrupts the DNA-binding part of LexA, leading to derepression of the SOS regulon and eventually DNA repair. In Burkholderia cenocepacia (strain ATCC BAA-245 / DSM 16553 / LMG 16656 / NCTC 13227 / J2315 / CF5610) (Burkholderia cepacia (strain J2315)), this protein is LexA repressor.